The chain runs to 317 residues: Melanocyte-stimulating hormone receptor (317 aa).

Over 1–37 the chain is Extracellular; that stretch reads MPVQGSLRSLVGAVNSTPTASPHLRPATNQTEPQCLE. Asn29 is a glycosylation site (N-linked (GlcNAc...) asparagine). Residues 38–63 form a helical membrane-spanning segment; that stretch reads VSVPVGLFLCLGLVSLVENTLVVAVI. At 64 to 72 the chain is on the cytoplasmic side; sequence AKNRNLHSP. Residues 73–93 form a helical membrane-spanning segment; that stretch reads MYCFICCLALSDLLVSVSNVL. Topologically, residues 94–118 are extracellular; the sequence is KTAVLLLLEAGALAAQATVVQQLGN. Residues 119-140 traverse the membrane as a helical segment; the sequence is VINMLICSSMVSSLCFLGAIAM. The Cytoplasmic portion of the chain corresponds to 141–163; that stretch reads DRYISIFYALRYHSIVTLARARR. The chain crosses the membrane as a helical span at residues 164-183; that stretch reads AIAAVWVASILSSILFFTYY. The Extracellular segment spans residues 184 to 191; the sequence is DRTAALLC. Residues 192-211 traverse the membrane as a helical segment; it reads LVVFFLAMLVLMAVLYVHML. Residues 212 to 240 lie on the Cytoplasmic side of the membrane; sequence TQACQHAQGIARLHKRQHPVQQGWGLKGA. A helical membrane pass occupies residues 241 to 266; the sequence is ATLAVLLGVFFLCWGPLFLHLTLIAV. Over 267–279 the chain is Extracellular; that stretch reads CPQHPTCNCIVKN. Residues 280–300 traverse the membrane as a helical segment; it reads FKLFLALIICNAIVDPLIYAF. At 301-317 the chain is on the cytoplasmic side; sequence RSQELRKTLKEVLLFSW.

The protein belongs to the G-protein coupled receptor 1 family. In terms of assembly, interacts with MGRN1, but does not undergo MGRN1-mediated ubiquitination; this interaction competes with GNAS-binding and thus inhibits agonist-induced cAMP production. Interacts with OPN3; the interaction results in a decrease in MC1R-mediated cAMP signaling and ultimately a decrease in melanin production in melanocytes.

The protein resides in the cell membrane. Its function is as follows. Receptor for MSH (alpha, beta and gamma) and ACTH. The activity of this receptor is mediated by G proteins which activate adenylate cyclase. Mediates melanogenesis, the production of eumelanin (black/brown) and phaeomelanin (red/yellow), via regulation of cAMP signaling in melanocytes. This Varecia rubra (Red ruffed lemur) protein is Melanocyte-stimulating hormone receptor (MC1R).